Consider the following 250-residue polypeptide: uncharacterized protein (250 aa).

Residue lysine 17 forms a Glycyl lysine isopeptide (Lys-Gly) (interchain with G-Cter in ubiquitin) linkage. The disordered stretch occupies residues 30-67 (REEDYVATSKDNIHHHPCDWSAKPSQRQNENEQKSTIR).

This is an uncharacterized protein from Saccharomyces cerevisiae (strain ATCC 204508 / S288c) (Baker's yeast).